Reading from the N-terminus, the 493-residue chain is 3-ketoacyl-CoA synthase 16 (493 aa).

The first 35 residues, 1–35, serve as a signal peptide directing secretion; sequence MDYPMKKVKIFFNYLMAHRFKLCFLPLMVAIAVEA. Residues 52–74 form a helical membrane-spanning segment; the sequence is NNHTSLTMFFLYLALGSTLYLMT. An FAE domain is found at 71-366; it reads YLMTRPKPVY…FFVRFVKKKF (296 aa). Residues Cys221, His300, His384, His388, His417, and Asn421 contribute to the active site.

The protein belongs to the thiolase-like superfamily. Chalcone/stilbene synthases family. Expressed in siliques.

The protein resides in the membrane. The enzyme catalyses a very-long-chain acyl-CoA + malonyl-CoA + H(+) = a very-long-chain 3-oxoacyl-CoA + CO2 + CoA. It participates in lipid metabolism; fatty acid biosynthesis. The chain is 3-ketoacyl-CoA synthase 16 from Arabidopsis thaliana (Mouse-ear cress).